A 138-amino-acid chain; its full sequence is Acidic phospholipase A2 AplTX-I (138 aa).

A signal peptide spans 1-16 (MRTLWIMAVLLLGVEG). Disulfide bonds link Cys42/Cys131, Cys44/Cys60, Cys59/Cys111, Cys65/Cys138, Cys66/Cys104, Cys73/Cys97, and Cys91/Cys102. Residues Tyr43, Gly45, and Gly47 each contribute to the Ca(2+) site. The active site involves His63. Ca(2+) is bound at residue Asp64. The active site involves Asp105.

As to quaternary structure, monomer. Requires Ca(2+) as cofactor. Expressed by the venom gland.

It localises to the secreted. It catalyses the reaction a 1,2-diacyl-sn-glycero-3-phosphocholine + H2O = a 1-acyl-sn-glycero-3-phosphocholine + a fatty acid + H(+). Its activity is regulated as follows. Inhibited by divalent cations different from calcium ions (cadmium, magnesium, manganese, zinc), since they act as competitive antagonists of this cofactor. In terms of biological role, snake venom phospholipase A2 (PLA2) that triggers a high neuromuscular toxicity in chick biventer cervicis preparations, but not in mouse phrenic nerve-diaphragm (PND) preparations, suggesting a selective neurotoxin activity towards birds. Does not induce myotoxic, coagulant, anticoagulant, edema, and antibacterial activities. PLA2 catalyzes the calcium-dependent hydrolysis of the 2-acyl groups in 3-sn-phosphoglycerides. In Agkistrodon piscivorus leucostoma (Western cottonmouth), this protein is Acidic phospholipase A2 AplTX-I.